A 489-amino-acid polypeptide reads, in one-letter code: uncharacterized protein (489 aa).

The next 12 membrane-spanning stretches (helical) occupy residues 14-34 (LLFV…ISLF), 36-56 (LGPF…IVTL), 100-120 (IIGP…FSGI), 127-147 (LVNT…LAFI), 158-178 (LIAL…IVAI), 203-223 (EISF…YAGV), 241-261 (ILIV…IILN), 286-306 (AAGL…NVST), 344-364 (IWFT…IPLV), 380-400 (VGSA…FKFI), 419-439 (LFCL…FPVI), and 449-469 (HTLT…LFLL).

It to M.genitalium MG226.

The protein localises to the cell membrane. This is an uncharacterized protein from Mycoplasma genitalium (strain ATCC 33530 / DSM 19775 / NCTC 10195 / G37) (Mycoplasmoides genitalium).